We begin with the raw amino-acid sequence, 102 residues long: MAERKIRIRLKAYEYRTIDASAAKIVETAKRTGAQVVGPIPLPTERTIYTILRSPHKHKDSREQFEMRTHKRLIDLVNPTDKTVDSLRKLDLPAGVAIEIKL.

It belongs to the universal ribosomal protein uS10 family. Part of the 30S ribosomal subunit.

Functionally, involved in the binding of tRNA to the ribosomes. This chain is Small ribosomal subunit protein uS10, found in Oenococcus oeni (strain ATCC BAA-331 / PSU-1).